Reading from the N-terminus, the 626-residue chain is Interferon-induced GTP-binding protein MxC (626 aa).

In terms of domain architecture, Dynamin-type G spans 40-313 (DLNLPAIAVI…LVEHIAKNVP (274 aa)). Residues 50 to 57 (GDQSSGKS) are G1 motif. GTP is bound at residue 50–57 (GDQSSGKS). Positions 75 to 77 (VTR) are G2 motif. The G3 motif stretch occupies residues 151 to 154 (DLPG). GTP contacts are provided by residues 151–155 (DLPGI) and 220–223 (TKPD). Residues 220–223 (TKPD) are G4 motif. The interval 252-255 (KCRG) is G5 motif. The 91-residue stretch at 534 to 624 (LRETAFHLTS…ALPKVVHSAN (91 aa)) folds into the GED domain.

This sequence belongs to the TRAFAC class dynamin-like GTPase superfamily. Dynamin/Fzo/YdjA family.

It is found in the cytoplasm. The polypeptide is Interferon-induced GTP-binding protein MxC (mxc) (Danio rerio (Zebrafish)).